A 300-amino-acid polypeptide reads, in one-letter code: Diaminopimelate epimerase (300 aa).

Positions 15, 47, and 67 each coordinate substrate. C76 serves as the catalytic Proton donor. Substrate contacts are provided by residues 77–78, N163, N197, and 215–216; these read GN and ER. C224 functions as the Proton acceptor in the catalytic mechanism. Residue 225 to 226 coordinates substrate; the sequence is GS. A disordered region spans residues 275 to 300; it reads SGTFDPATGEWSRDAQNDKPTDRGAA. Over residues 285–300 the composition is skewed to basic and acidic residues; sequence WSRDAQNDKPTDRGAA.

The protein belongs to the diaminopimelate epimerase family. As to quaternary structure, homodimer.

The protein localises to the cytoplasm. The enzyme catalyses (2S,6S)-2,6-diaminopimelate = meso-2,6-diaminopimelate. The protein operates within amino-acid biosynthesis; L-lysine biosynthesis via DAP pathway; DL-2,6-diaminopimelate from LL-2,6-diaminopimelate: step 1/1. Catalyzes the stereoinversion of LL-2,6-diaminopimelate (L,L-DAP) to meso-diaminopimelate (meso-DAP), a precursor of L-lysine and an essential component of the bacterial peptidoglycan. In Brucella anthropi (strain ATCC 49188 / DSM 6882 / CCUG 24695 / JCM 21032 / LMG 3331 / NBRC 15819 / NCTC 12168 / Alc 37) (Ochrobactrum anthropi), this protein is Diaminopimelate epimerase.